We begin with the raw amino-acid sequence, 296 residues long: Thiamine-monophosphate kinase (296 aa).

Aspartate 32, threonine 46, and aspartate 48 together coordinate Mg(2+). Residue aspartate 55 coordinates substrate. Residues aspartate 76 and aspartate 121 each coordinate Mg(2+). Residues 120–121 (GD) and arginine 144 contribute to the ATP site. A Mg(2+)-binding site is contributed by aspartate 206. Serine 208 is an ATP binding site. Aspartate 209 provides a ligand contact to Mg(2+). Tyrosine 293 lines the substrate pocket.

Belongs to the thiamine-monophosphate kinase family.

It catalyses the reaction thiamine phosphate + ATP = thiamine diphosphate + ADP. Its pathway is cofactor biosynthesis; thiamine diphosphate biosynthesis; thiamine diphosphate from thiamine phosphate: step 1/1. In terms of biological role, catalyzes the ATP-dependent phosphorylation of thiamine-monophosphate (TMP) to form thiamine-pyrophosphate (TPP), the active form of vitamin B1. This is Thiamine-monophosphate kinase from Archaeoglobus fulgidus (strain ATCC 49558 / DSM 4304 / JCM 9628 / NBRC 100126 / VC-16).